Reading from the N-terminus, the 517-residue chain is MDIVGGQNLRQMWDDLAGVYGDKTALIFESCEGIVRQFSYASLNEEINRTANLFYSLGIRKGDRVALHLDNCPEFIFCWFGLAKIGAIMVPINARLLGEESAWILQNSQVSLLVTSAQFYPMYREIRQDNSTPLNHICLIGEQLPADDGVSHFTQRQSRQSTTLCYTPALSTDDTAEILFTSGTTSRPKGVVITHYNLRFAGYYSAWQIALRDDDVYMTVMPAFHIDCQCTAAMPAFSAGSTFVLLEKYSARAFWDQVRKYQATVTECIPMMIRTLMVQPAAPTDRQHHLREVMFYLNLSAQEKDAFTERFGVRLLTSYGMTETIVGIIGDRPGDKRRWPSIGRVGFSYEAEIRDDQNRPLPAGEIGEICIKGIPGKTIFKEYYMQPEATARALEPEGWLHTGDSGYQDEDGYFYFVDRRCNMIKRGGENVSCVELENIISAHPKIQDIVVVGIKDAIRDEAIKAFIVLNEGETLSEAEFFSFCENNMAKFKVPSFMEIRTDLPRNCSGKIIKKNLK.

This sequence belongs to the ATP-dependent AMP-binding enzyme family.

It carries out the reaction 4-(trimethylamino)butanoate + ATP + CoA = 4-(trimethylamino)butanoyl-CoA + AMP + diphosphate. The catalysed reaction is crotonobetaine + ATP + CoA = crotonobetainyl-CoA + AMP + diphosphate. It catalyses the reaction (R)-carnitine + ATP + CoA = (R)-carnitinyl-CoA + AMP + diphosphate. It participates in amine and polyamine metabolism; carnitine metabolism. Catalyzes the transfer of CoA to carnitine, generating the initial carnitinyl-CoA needed for the CaiB reaction cycle. Also has activity toward crotonobetaine and gamma-butyrobetaine. The chain is Crotonobetaine/carnitine--CoA ligase from Salmonella paratyphi B (strain ATCC BAA-1250 / SPB7).